A 338-amino-acid chain; its full sequence is 4-hydroxy-2-oxovalerate aldolase (338 aa).

The Pyruvate carboxyltransferase domain maps to 6–256 (IHIVDTTLRD…RTGVDFYKVM (251 aa)). Residue 14-15 (RD) coordinates substrate. A Mn(2+)-binding site is contributed by D15. Residue H18 is the Proton acceptor of the active site. Positions 168 and 195 each coordinate substrate. The Mn(2+) site is built by H195 and H197. Residue Y286 coordinates substrate.

It belongs to the 4-hydroxy-2-oxovalerate aldolase family.

The catalysed reaction is (S)-4-hydroxy-2-oxopentanoate = acetaldehyde + pyruvate. This chain is 4-hydroxy-2-oxovalerate aldolase, found in Moorella thermoacetica (strain ATCC 39073 / JCM 9320).